The following is a 347-amino-acid chain: Quinolinate synthase (347 aa).

2 residues coordinate iminosuccinate: His-47 and Ser-68. Residue Cys-113 participates in [4Fe-4S] cluster binding. Iminosuccinate contacts are provided by residues Tyr-139–Asn-141 and Ser-156. Cys-200 provides a ligand contact to [4Fe-4S] cluster. Iminosuccinate is bound by residues His-226–Glu-228 and Thr-243. Residue Cys-297 coordinates [4Fe-4S] cluster.

Belongs to the quinolinate synthase family. Type 1 subfamily. [4Fe-4S] cluster serves as cofactor.

The protein resides in the cytoplasm. The enzyme catalyses iminosuccinate + dihydroxyacetone phosphate = quinolinate + phosphate + 2 H2O + H(+). It participates in cofactor biosynthesis; NAD(+) biosynthesis; quinolinate from iminoaspartate: step 1/1. Its function is as follows. Catalyzes the condensation of iminoaspartate with dihydroxyacetone phosphate to form quinolinate. The sequence is that of Quinolinate synthase from Salmonella heidelberg (strain SL476).